The chain runs to 1133 residues: Roquin-1 (1133 aa).

Zn(2+)-binding residues include cysteine 14, cysteine 17, cysteine 33, histidine 35, cysteine 38, cysteine 50, and aspartate 53. Residues 14-54 (CPICTQTFDETIRKPISLGCGHTVCKMCLNKLHRKACPFDQ) form an RING-type; degenerate zinc finger. Positions 89 to 173 (GVEDTKHYEE…RTVTELILQH (85 aa)) are HEPN-N. The segment at 174–326 (QNPQQLSSNL…MQSIIDKLQT (153 aa)) is ROQ. An HEPN-C region spans residues 327–396 (PASFAQSVQE…VVHGLVDYIQ (70 aa)). The C3H1-type zinc finger occupies 413 to 441 (KYKTYMCRDMKQRGGCPRGASCTFAHSQE). Phosphoserine occurs at positions 462, 531, 535, and 863. The disordered stretch occupies residues 505–542 (TQLIPRGTDPSYDSSLKPGKIDHLSSSAPGSPPDLLES). 3 disordered regions span residues 1000-1019 (NTLA…WPGM), 1058-1078 (NTSK…PAED), and 1094-1133 (QENI…SSAP). Positions 1007-1016 (QPPPPPPPKW) are enriched in pro residues. Polar residues predominate over residues 1058–1070 (NTSKQAENGQPEP). The segment covering 1096–1110 (NISLLSNKTSSLNLS) has biased composition (low complexity). A Phosphoserine modification is found at serine 1110. Residues 1119–1133 (NNDSQRSGVTPSSAP) are compositionally biased toward polar residues.

As to quaternary structure, able to homodimerize. Interacts with DDX6 and EDC4. Interacts with CCR4-NOT deadenylase complex. Interacts with RC3H1; the interaction is RNA independent. Post-translationally, proteolytically cleaved after Arg-510 and Arg-579 by MALT1 in activated CD4(+) T cells; cleavage at Arg-510 and Arg-579 is critical for promoting RC3H1 degradation in response to T-cell receptor (TCR) stimulation, and hence is necessary for prolonging the stability of a set of mRNAs controlling Th17 cell differentiation. As to expression, widely expressed. Expressed at higher level in cerebellum, spleen, ovary and liver.

It localises to the cytoplasm. Its subcellular location is the P-body. The protein resides in the cytoplasmic granule. It carries out the reaction S-ubiquitinyl-[E2 ubiquitin-conjugating enzyme]-L-cysteine + [acceptor protein]-L-lysine = [E2 ubiquitin-conjugating enzyme]-L-cysteine + N(6)-ubiquitinyl-[acceptor protein]-L-lysine.. It functions in the pathway protein modification; protein ubiquitination. Post-transcriptional repressor of mRNAs containing a conserved stem loop motif, called constitutive decay element (CDE), which is often located in the 3'-UTR, as in HMGXB3, ICOS, IER3, NFKBID, NFKBIZ, PPP1R10, TNF, TNFRSF4 and in many more mRNAs. Cleaves translationally inactive mRNAs harboring a stem-loop (SL), often located in their 3'-UTRs, during the early phase of inflammation in a helicase UPF1-independent manner. Binds to CDE and promotes mRNA deadenylation and degradation. This process does not involve miRNAs. In follicular helper T (Tfh) cells, represses of ICOS and TNFRSF4 expression, thus preventing spontaneous Tfh cell differentiation, germinal center B-cell differentiation in the absence of immunization and autoimmunity. In resting or LPS-stimulated macrophages, controls inflammation by suppressing TNF expression. Also recognizes CDE in its own mRNA and in that of paralogous RC3H2, possibly leading to feedback loop regulation. Recognizes and binds mRNAs containing a hexaloop stem-loop motif, called alternative decay element (ADE). Together with ZC3H12A, destabilizes TNFRSF4/OX40 mRNA by binding to the conserved stem loop structure in its 3'UTR. Able to interact with double-stranded RNA (dsRNA). miRNA-binding protein that regulates microRNA homeostasis. Enhances DICER-mediated processing of pre-MIR146a but reduces mature MIR146a levels through an increase of 3' end uridylation. Both inhibits ICOS mRNA expression and they may act together to exert the suppression. Acts as a ubiquitin E3 ligase. Pairs with E2 enzymes UBE2A, UBE2B, UBE2D2, UBE2F, UBE2G1, UBE2G2 and UBE2L3 and produces polyubiquitin chains. Shows the strongest activity when paired with UBE2N:UBE2V1 or UBE2N:UBE2V2 E2 complexes and generate both short and long polyubiquitin chains. In Homo sapiens (Human), this protein is Roquin-1.